Consider the following 214-residue polypeptide: Neuromodulin (214 aa).

Positions 1–214 are disordered; that stretch reads MLCCMRRTKQ…EEAKPDQENA (214 aa). 2 S-palmitoyl cysteine lipidation sites follow: Cys3 and Cys4. 3 stretches are compositionally biased toward basic and acidic residues: residues 9 to 33, 52 to 88, and 95 to 122; these read KQVEKNEDGDQKIDQDGNKPEDKAH, MKDDKKDDNSEEAVENHKGEAKDEAATTENKTPKTEE, and LEVKKEAISSPAEDKKQEPSSEKPKDTP. Residues 32 to 61 form the IQ domain; sequence AHKAATKIQASFRGHIIRKKMKDDKKDDNS. Residues 124–133 are compositionally biased toward low complexity; the sequence is EENQASAESE. Composition is skewed to basic and acidic residues over residues 150 to 160, 168 to 193, and 205 to 214; these read QAKEESKKADV, ASEKEQEKAESSQEDVKKDEVEEIKA, and EEAKPDQENA.

This sequence belongs to the neuromodulin family. As to quaternary structure, binds calmodulin with a greater affinity in the absence of Ca(2+) than in its presence. In terms of processing, palmitoylated. Palmitoylation is essential for plasma membrane association.

The protein localises to the cell membrane. It is found in the cell projection. Its subcellular location is the growth cone membrane. The protein resides in the synapse. It localises to the filopodium membrane. Its function is as follows. This protein is associated with nerve growth. It is a major component of the motile 'growth cones' that form the tips of elongating axons. Plays a role in axonal and dendritic filopodia induction. The polypeptide is Neuromodulin (gap43) (Xenopus laevis (African clawed frog)).